Consider the following 1378-residue polypeptide: DNA-directed RNA polymerase subunit beta (1378 aa).

This sequence belongs to the RNA polymerase beta chain family. In terms of assembly, the RNAP catalytic core consists of 2 alpha, 1 beta, 1 beta' and 1 omega subunit. When a sigma factor is associated with the core the holoenzyme is formed, which can initiate transcription.

It carries out the reaction RNA(n) + a ribonucleoside 5'-triphosphate = RNA(n+1) + diphosphate. In terms of biological role, DNA-dependent RNA polymerase catalyzes the transcription of DNA into RNA using the four ribonucleoside triphosphates as substrates. This Hyphomonas neptunium (strain ATCC 15444) protein is DNA-directed RNA polymerase subunit beta.